The primary structure comprises 183 residues: MPFRDTYIMSPINRRRCSRVSLVECLQLTWSTXELLVFEFKPRMSFSHTQSVLYPKNTYCHSFKHFLSNQTLSSLKSVESCIRMGNLTCMPSFNSRVKSRLRTIVSSIVYTQAVAPVSTPTFKVPNQARMSSPIWIRTATPSNGDNFKSMDDLLEAVNNQRMMLTPKRLTAAVSQKLLMSLGN.

This sequence belongs to the geminiviridae protein AC4/C4 family.

Functionally, pathogenicity determinant. May act as a suppressor of RNA-mediated gene silencing, also known as post-transcriptional gene silencing (PTGS), a mechanism of plant viral defense that limits the accumulation of viral RNAs. The protein is Protein AC4 of African cassava mosaic virus (isolate West Kenyan 844) (ACMV).